Consider the following 720-residue polypeptide: 1,4-alpha-glucan branching enzyme GlgB 2 (720 aa).

D398 (nucleophile) is an active-site residue. E451 functions as the Proton donor in the catalytic mechanism.

The protein belongs to the glycosyl hydrolase 13 family. GlgB subfamily. As to quaternary structure, monomer.

It carries out the reaction Transfers a segment of a (1-&gt;4)-alpha-D-glucan chain to a primary hydroxy group in a similar glucan chain.. The protein operates within glycan biosynthesis; glycogen biosynthesis. Its function is as follows. Catalyzes the formation of the alpha-1,6-glucosidic linkages in glycogen by scission of a 1,4-alpha-linked oligosaccharide from growing alpha-1,4-glucan chains and the subsequent attachment of the oligosaccharide to the alpha-1,6 position. The protein is 1,4-alpha-glucan branching enzyme GlgB 2 of Xanthomonas oryzae pv. oryzae (strain KACC10331 / KXO85).